We begin with the raw amino-acid sequence, 108 residues long: Phosphoribosyl-AMP cyclohydrolase (108 aa).

D78 provides a ligand contact to Mg(2+). Residue C79 participates in Zn(2+) binding. Residues D80 and D82 each contribute to the Mg(2+) site. Zn(2+)-binding residues include C95 and C102.

The protein belongs to the PRA-CH family. In terms of assembly, homodimer. Mg(2+) is required as a cofactor. Requires Zn(2+) as cofactor.

The protein resides in the cytoplasm. It carries out the reaction 1-(5-phospho-beta-D-ribosyl)-5'-AMP + H2O = 1-(5-phospho-beta-D-ribosyl)-5-[(5-phospho-beta-D-ribosylamino)methylideneamino]imidazole-4-carboxamide. Its pathway is amino-acid biosynthesis; L-histidine biosynthesis; L-histidine from 5-phospho-alpha-D-ribose 1-diphosphate: step 3/9. Catalyzes the hydrolysis of the adenine ring of phosphoribosyl-AMP. This is Phosphoribosyl-AMP cyclohydrolase from Nitrosopumilus maritimus (strain SCM1).